A 102-amino-acid polypeptide reads, in one-letter code: Urease subunit beta (102 aa).

This sequence belongs to the urease beta subunit family. As to quaternary structure, heterotrimer of UreA (gamma), UreB (beta) and UreC (alpha) subunits. Three heterotrimers associate to form the active enzyme.

The protein localises to the cytoplasm. It catalyses the reaction urea + 2 H2O + H(+) = hydrogencarbonate + 2 NH4(+). It functions in the pathway nitrogen metabolism; urea degradation; CO(2) and NH(3) from urea (urease route): step 1/1. This is Urease subunit beta from Pseudomonas savastanoi pv. phaseolicola (strain 1448A / Race 6) (Pseudomonas syringae pv. phaseolicola (strain 1448A / Race 6)).